Reading from the N-terminus, the 350-residue chain is Biotin synthase (350 aa).

In terms of domain architecture, Radical SAM core spans 41 to 268 (NEVQVSRLLS…KSRVRLSAGR (228 aa)). [4Fe-4S] cluster contacts are provided by Cys-56, Cys-60, and Cys-63. Positions 100, 131, 191, and 263 each coordinate [2Fe-2S] cluster.

Belongs to the radical SAM superfamily. Biotin synthase family. As to quaternary structure, homodimer. [4Fe-4S] cluster is required as a cofactor. It depends on [2Fe-2S] cluster as a cofactor.

The enzyme catalyses (4R,5S)-dethiobiotin + (sulfur carrier)-SH + 2 reduced [2Fe-2S]-[ferredoxin] + 2 S-adenosyl-L-methionine = (sulfur carrier)-H + biotin + 2 5'-deoxyadenosine + 2 L-methionine + 2 oxidized [2Fe-2S]-[ferredoxin]. Its pathway is cofactor biosynthesis; biotin biosynthesis; biotin from 7,8-diaminononanoate: step 2/2. Catalyzes the conversion of dethiobiotin (DTB) to biotin by the insertion of a sulfur atom into dethiobiotin via a radical-based mechanism. The sequence is that of Biotin synthase from Shewanella pealeana (strain ATCC 700345 / ANG-SQ1).